The following is a 158-amino-acid chain: Deoxyuridine 5'-triphosphate nucleotidohydrolase (158 aa).

Substrate-binding positions include 66 to 68, Asn-79, 83 to 85, and Lys-93; these read RSG and TID. The disordered stretch occupies residues 139 to 158; the sequence is RGFGSSGVARKGHYQGKPLA.

It belongs to the dUTPase family. It depends on Mg(2+) as a cofactor.

The enzyme catalyses dUTP + H2O = dUMP + diphosphate + H(+). It functions in the pathway pyrimidine metabolism; dUMP biosynthesis; dUMP from dCTP (dUTP route): step 2/2. Functionally, this enzyme is involved in nucleotide metabolism: it produces dUMP, the immediate precursor of thymidine nucleotides and it decreases the intracellular concentration of dUTP so that uracil cannot be incorporated into DNA. In Helicobacter hepaticus (strain ATCC 51449 / 3B1), this protein is Deoxyuridine 5'-triphosphate nucleotidohydrolase.